The chain runs to 211 residues: uncharacterized protein (211 aa).

At 1-33 the chain is on the cytoplasmic side; the sequence is MQNGTEDKSNIPARSNDDVLPPLAVRLTMKVMR. Residues 34–54 traverse the membrane as a helical segment; that stretch reads LIFIGKMFAYSFVPFPPFKLL. Residues 55-58 are Lumenal-facing; sequence TFDN. Residues 59–79 form a helical membrane-spanning segment; the sequence is TVGWFVAYSAIVSIWGFAVWM. Topologically, residues 80–116 are cytoplasmic; sequence ERGYRHKINLLPPRCTKIRCSRCNTRIRSPNWFKYKN. A helical membrane pass occupies residues 117 to 137; that stretch reads WLYFFLLYVSLTTSNLIIQLA. Residues 138-162 are Lumenal-facing; the sequence is SFMTEMSRRGISVPGTKDPGKRDYL. Residues 163-183 traverse the membrane as a helical segment; sequence GLIIPMRFIGAFIHYMTANLF. Residues 184–211 lie on the Cytoplasmic side of the membrane; the sequence is KEYYLHNGPLEKNDRPSTDEKTSENETL.

Its subcellular location is the endoplasmic reticulum membrane. This is an uncharacterized protein from Saccharomyces cerevisiae (strain ATCC 204508 / S288c) (Baker's yeast).